A 71-amino-acid chain; its full sequence is uncharacterized protein (71 aa).

Residues 37–57 (IGVGVSDGVSAGVGVGVAMII) form a helical membrane-spanning segment.

It is found in the membrane. This is an uncharacterized protein from Dictyostelium discoideum (Social amoeba).